The primary structure comprises 540 residues: Phosphoenolpyruvate carboxykinase (ATP) (540 aa).

Arg65 provides a ligand contact to substrate. N6-acetyllysine is present on Lys87. 2 residues coordinate substrate: Tyr207 and Lys213. Residues Lys213, His232, and 248–256 (GLSGTGKTT) each bind ATP. Lys213 and His232 together coordinate Mn(2+). Mn(2+) is bound at residue Asp269. Residues Glu297, Arg333, 449-450 (RI), and Thr455 contribute to the ATP site. A substrate-binding site is contributed by Arg333. Lys523 bears the N6-acetyllysine mark.

This sequence belongs to the phosphoenolpyruvate carboxykinase (ATP) family. Monomer. Mn(2+) serves as cofactor.

It localises to the cytoplasm. It carries out the reaction oxaloacetate + ATP = phosphoenolpyruvate + ADP + CO2. It functions in the pathway carbohydrate biosynthesis; gluconeogenesis. Involved in the gluconeogenesis. Catalyzes the conversion of oxaloacetate (OAA) to phosphoenolpyruvate (PEP) through direct phosphoryl transfer between the nucleoside triphosphate and OAA. This is Phosphoenolpyruvate carboxykinase (ATP) from Shigella flexneri serotype 5b (strain 8401).